A 200-amino-acid polypeptide reads, in one-letter code: Probable molybdenum cofactor guanylyltransferase (200 aa).

Residues 9–11, Lys21, Asp69, and Asp100 contribute to the GTP site; that span reads LAG. A Mg(2+)-binding site is contributed by Asp100.

It belongs to the MobA family. Mg(2+) serves as cofactor.

The protein localises to the cytoplasm. The enzyme catalyses Mo-molybdopterin + GTP + H(+) = Mo-molybdopterin guanine dinucleotide + diphosphate. Functionally, transfers a GMP moiety from GTP to Mo-molybdopterin (Mo-MPT) cofactor (Moco or molybdenum cofactor) to form Mo-molybdopterin guanine dinucleotide (Mo-MGD) cofactor. In Bacillus cereus (strain B4264), this protein is Probable molybdenum cofactor guanylyltransferase.